Reading from the N-terminus, the 255-residue chain is Triosephosphate isomerase (255 aa).

9–11 (NWK) serves as a coordination point for substrate. Residue histidine 95 is the Electrophile of the active site. Residue glutamate 167 is the Proton acceptor of the active site. Residues glycine 173, serine 212, and 233 to 234 (GG) contribute to the substrate site.

It belongs to the triosephosphate isomerase family. Homodimer.

It localises to the cytoplasm. It catalyses the reaction D-glyceraldehyde 3-phosphate = dihydroxyacetone phosphate. It functions in the pathway carbohydrate biosynthesis; gluconeogenesis. Its pathway is carbohydrate degradation; glycolysis; D-glyceraldehyde 3-phosphate from glycerone phosphate: step 1/1. Involved in the gluconeogenesis. Catalyzes stereospecifically the conversion of dihydroxyacetone phosphate (DHAP) to D-glyceraldehyde-3-phosphate (G3P). This chain is Triosephosphate isomerase, found in Yersinia pseudotuberculosis serotype O:1b (strain IP 31758).